Here is a 322-residue protein sequence, read N- to C-terminus: ATP-dependent 6-phosphofructokinase (322 aa).

ATP-binding positions include Gly12, 73–74 (RF), and 103–106 (GDGT). A Mg(2+)-binding site is contributed by Asp104. Residue 126-128 (TID) participates in substrate binding. Asp128 acts as the Proton acceptor in catalysis. Arg155 contributes to the ADP binding site. Substrate is bound by residues Arg163 and 170–172 (MGR). ADP contacts are provided by residues 186–188 (GSE), Lys212, and 214–216 (KPS). Substrate is bound by residues Glu223, Arg245, and 251–254 (HTQR).

Belongs to the phosphofructokinase type A (PFKA) family. ATP-dependent PFK group I subfamily. Prokaryotic clade 'B1' sub-subfamily. As to quaternary structure, homotetramer. The cofactor is Mg(2+).

It is found in the cytoplasm. It catalyses the reaction beta-D-fructose 6-phosphate + ATP = beta-D-fructose 1,6-bisphosphate + ADP + H(+). Its pathway is carbohydrate degradation; glycolysis; D-glyceraldehyde 3-phosphate and glycerone phosphate from D-glucose: step 3/4. Allosterically activated by ADP and other diphosphonucleosides, and allosterically inhibited by phosphoenolpyruvate. In terms of biological role, catalyzes the phosphorylation of D-fructose 6-phosphate to fructose 1,6-bisphosphate by ATP, the first committing step of glycolysis. The polypeptide is ATP-dependent 6-phosphofructokinase (Mesomycoplasma hyopneumoniae (strain J / ATCC 25934 / NCTC 10110) (Mycoplasma hyopneumoniae)).